Consider the following 265-residue polypeptide: Anamorsin homolog 1 (265 aa).

Residues 1–143 form an N-terminal SAM-like domain region; that stretch reads MAATAAAALA…KASWSMGSSF (143 aa). The segment at 144 to 175 is linker; it reads PLKKATKGLPKIQIDDDSELIDEDSLLTEDDL. The [2Fe-2S] cluster site is built by Cys186, Cys195, Cys198, and Cys200. Residues 186-200 are fe-S binding site A; it reads CEVGATRKACKNCTC. Cys226, Cys229, Cys237, and Cys240 together coordinate [4Fe-4S] cluster. 2 consecutive short sequence motifs (cx2C motif) follow at residues 226-229 and 237-240; these read CGNC and CGTC. A fe-S binding site B region spans residues 226 to 240; that stretch reads CGNCGLGDAFRCGTC.

The protein belongs to the anamorsin family. Monomer. The cofactor is [2Fe-2S] cluster. [4Fe-4S] cluster serves as cofactor.

The protein resides in the cytoplasm. It localises to the mitochondrion intermembrane space. In terms of biological role, component of the cytosolic iron-sulfur (Fe-S) protein assembly (CIA) machinery. Required for the maturation of extramitochondrial Fe-S proteins. Part of an electron transfer chain functioning in an early step of cytosolic Fe-S biogenesis, facilitating the de novo assembly of a [4Fe-4S] cluster on the cytosolic Fe-S scaffold complex. Electrons are transferred from NADPH via a FAD- and FMN-containing diflavin oxidoreductase. Together with the diflavin oxidoreductase, also required for the assembly of the diferric tyrosyl radical cofactor of ribonucleotide reductase (RNR), probably by providing electrons for reduction during radical cofactor maturation in the catalytic small subunit. The polypeptide is Anamorsin homolog 1 (Oryza sativa subsp. indica (Rice)).